The primary structure comprises 433 residues: Indole diterpene prenyltransferase terF (433 aa).

It belongs to the tryptophan dimethylallyltransferase family.

The protein operates within secondary metabolite biosynthesis. In terms of biological role, indole diterpene prenyltransferase; part of the gene cluster that mediates the biosynthesis of terpendoles, indole-diterpene (IDT) mycotoxins including terpendole I, terpendole K, terpendole C, as well as the kinesin Eg5 inhibitor terpendole E. Terpendoles biosynthesis begins with the synthesis of geranylgeranyl diphosphate (GGPP) by a yet unidentified GGPP synthase. Condensation of indole-3-glycerol phosphate with GGPP by the prenyltransferase terC then forms 3-geranylgeranylindole (3-GGI), followed by epoxidation and cyclization of this intermediate (by the FAD-dependent monooxygeanse terM and the terpene cyclase terB) to form paspaline. The cytochrome monooxygenase terQ then hydroxylates paspalline at C-11 to yield terpendole E. The cytochrome monooxygenase terP converts terpendole E to 13-desoxyterpendole I, and terQ converts 13-desoxyterpendole I into terpendole I. TerF and terK are required for conversion of terpendole I to terpendole C which is further converted to terpendole K. The sequence is that of Indole diterpene prenyltransferase terF from Tolypocladium album (Soil fungus).